Consider the following 593-residue polypeptide: Prospero homeobox protein 2 (593 aa).

Disordered stretches follow at residues 24 to 48 (CMDQ…QLPS), 79 to 130 (SPSS…GGTR), 153 to 199 (TEPR…KDLC), 260 to 284 (QERS…SAYK), 298 to 333 (PQAG…QSPL), and 356 to 388 (GRGP…PWGL). Basic and acidic residues predominate over residues 87–99 (RARESLRCPEKGR). Positions 167-181 (PRSSPRARPRNSCSS) are enriched in low complexity. Residues 363-380 (WSGSPPQDAAFQSHTSPE) are compositionally biased toward polar residues. One can recognise a Prospero-type homeo domain in the interval 433 to 491 (QEGLSPGHLKKAKLMFFFTRYPSSSLLKAYFPDVQFNRCITSQMIKWFSNFREFYYIQM). The segment at 433–591 (QEGLSPGHLK…KSPSFLPGLF (159 aa)) is homeo-Prospero. In terms of domain architecture, Prospero spans 492–591 (EKYARQALSD…KSPSFLPGLF (100 aa)).

The protein belongs to the Prospero homeodomain family. Expressed in testis.

It is found in the nucleus. Transcription regulator. Does not seem to be essential for embryonic development and postnatal survival. In Mus musculus (Mouse), this protein is Prospero homeobox protein 2 (Prox2).